Consider the following 149-residue polypeptide: Urease accessory protein UreE (149 aa).

This sequence belongs to the UreE family.

The protein localises to the cytoplasm. Involved in urease metallocenter assembly. Binds nickel. Probably functions as a nickel donor during metallocenter assembly. The protein is Urease accessory protein UreE of Prochlorococcus marinus (strain MIT 9215).